A 38-amino-acid chain; its full sequence is Photosystem II reaction center protein M (38 aa).

Residues 7–27 (GFVASILFVLVPSVFLIILYI) traverse the membrane as a helical segment.

It belongs to the PsbM family. In terms of assembly, PSII is composed of 1 copy each of membrane proteins PsbA, PsbB, PsbC, PsbD, PsbE, PsbF, PsbH, PsbI, PsbJ, PsbK, PsbL, PsbM, PsbT, PsbX, PsbY, PsbZ, Psb30/Ycf12, peripheral proteins PsbO, CyanoQ (PsbQ), PsbU, PsbV and a large number of cofactors. It forms dimeric complexes.

It localises to the cellular thylakoid membrane. Its function is as follows. One of the components of the core complex of photosystem II (PSII). PSII is a light-driven water:plastoquinone oxidoreductase that uses light energy to abstract electrons from H(2)O, generating O(2) and a proton gradient subsequently used for ATP formation. It consists of a core antenna complex that captures photons, and an electron transfer chain that converts photonic excitation into a charge separation. This subunit is found at the monomer-monomer interface. The protein is Photosystem II reaction center protein M of Nostoc sp. (strain PCC 7120 / SAG 25.82 / UTEX 2576).